The sequence spans 332 residues: Packaging enzyme P4 (332 aa).

Residues 111–138 (RWPSEGIYSGVTALMGATGSGKSITLNE) form an involved in the regulation and mechanisms of transcription, replication and genome packaging region. 126–133 (GATGSGKS) contacts ATP. The disordered stretch occupies residues 310–332 (LERGSVDTDDRNSAPRRGANFSL). The segment covering 313 to 322 (GSVDTDDRNS) has biased composition (basic and acidic residues).

As to quaternary structure, homohexamer. Part of the packaging complex composed of RDRP, P4 and P7.

It is found in the virion. It carries out the reaction a ribonucleoside 5'-triphosphate + H2O = a ribonucleoside 5'-diphosphate + phosphate + H(+). In terms of biological role, packaging motor with helicase and translocase activities. Part of the packaging complex that packages the viral RNA segments, replicate them into a double-stranded form and transcribe them. is one of the structural proteins of the polyhedral procapsid, which is responsible for genomic replication and transcription. Displays single-stranded RNA-stimulated NTPase activity. The sequence is that of Packaging enzyme P4 (P4) from Pseudomonas savastanoi pv. phaseolicola (Pseudomonas syringae pv. phaseolicola).